A 127-amino-acid polypeptide reads, in one-letter code: Large ribosomal subunit protein bL17 (127 aa).

It belongs to the bacterial ribosomal protein bL17 family. As to quaternary structure, part of the 50S ribosomal subunit. Contacts protein L32.

This chain is Large ribosomal subunit protein bL17, found in Ligilactobacillus salivarius (strain UCC118) (Lactobacillus salivarius).